The sequence spans 273 residues: 2,3,4,5-tetrahydropyridine-2,6-dicarboxylate N-succinyltransferase (273 aa).

It belongs to the transferase hexapeptide repeat family.

It is found in the cytoplasm. The enzyme catalyses (S)-2,3,4,5-tetrahydrodipicolinate + succinyl-CoA + H2O = (S)-2-succinylamino-6-oxoheptanedioate + CoA. The protein operates within amino-acid biosynthesis; L-lysine biosynthesis via DAP pathway; LL-2,6-diaminopimelate from (S)-tetrahydrodipicolinate (succinylase route): step 1/3. In Bordetella petrii (strain ATCC BAA-461 / DSM 12804 / CCUG 43448), this protein is 2,3,4,5-tetrahydropyridine-2,6-dicarboxylate N-succinyltransferase.